The following is a 159-amino-acid chain: Ribonuclease H (159 aa).

The RNase H type-1 domain occupies 8–150 (NLKEITMYTD…CDQLAVAAAK (143 aa)). D17, E55, D77, and D142 together coordinate Mg(2+).

It belongs to the RNase H family. As to quaternary structure, monomer. Requires Mg(2+) as cofactor.

The protein resides in the cytoplasm. The enzyme catalyses Endonucleolytic cleavage to 5'-phosphomonoester.. Its function is as follows. Endonuclease that specifically degrades the RNA of RNA-DNA hybrids. This chain is Ribonuclease H, found in Desulforamulus reducens (strain ATCC BAA-1160 / DSM 100696 / MI-1) (Desulfotomaculum reducens).